Here is a 94-residue protein sequence, read N- to C-terminus: Cell division topological specificity factor (94 aa).

It belongs to the MinE family.

In terms of biological role, prevents the cell division inhibition by proteins MinC and MinD at internal division sites while permitting inhibition at polar sites. This ensures cell division at the proper site by restricting the formation of a division septum at the midpoint of the long axis of the cell. This is Cell division topological specificity factor from Acetivibrio thermocellus (strain ATCC 27405 / DSM 1237 / JCM 9322 / NBRC 103400 / NCIMB 10682 / NRRL B-4536 / VPI 7372) (Clostridium thermocellum).